Here is a 127-residue protein sequence, read N- to C-terminus: V-type proton ATPase subunit F (127 aa).

This sequence belongs to the V-ATPase F subunit family. V-ATPase is a heteromultimeric enzyme made up of two complexes: the ATP-hydrolytic V1 complex and the proton translocation V0 complex. The V1 complex consists of three catalytic AB heterodimers that form a heterohexamer, three peripheral stalks each consisting of EG heterodimers, one central rotor including subunits D and F, and the regulatory subunits C and H. The proton translocation complex V0 consists of the proton transport subunit a, a ring of proteolipid subunits c9c'', rotary subunit d, subunits e and f, and the accessory subunits VhaAC45 and ATP6AP2.

In terms of biological role, subunit of the V1 complex of vacuolar(H+)-ATPase (V-ATPase), a multisubunit enzyme composed of a peripheral complex (V1) that hydrolyzes ATP and a membrane integral complex (V0) that translocates protons. V-ATPase is responsible for acidifying and maintaining the pH of intracellular compartments and in some cell types, is targeted to the plasma membrane, where it is responsible for acidifying the extracellular environment. The polypeptide is V-type proton ATPase subunit F (Aedes aegypti (Yellowfever mosquito)).